Here is a 152-residue protein sequence, read N- to C-terminus: Superoxide dismutase [Cu-Zn] (152 aa).

Cu cation contacts are provided by H45, H47, and H62. Residues C56 and C145 are joined by a disulfide bond. The Zn(2+) site is built by H62, H70, H79, and D82. Position 119 (H119) interacts with Cu cation.

Belongs to the Cu-Zn superoxide dismutase family. As to quaternary structure, homodimer. Cu cation is required as a cofactor. The cofactor is Zn(2+).

Its subcellular location is the cytoplasm. The enzyme catalyses 2 superoxide + 2 H(+) = H2O2 + O2. In terms of biological role, destroys radicals which are normally produced within the cells and which are toxic to biological systems. This is Superoxide dismutase [Cu-Zn] (SODCC) from Nicotiana plumbaginifolia (Leadwort-leaved tobacco).